A 110-amino-acid polypeptide reads, in one-letter code: T cell receptor alpha variable 39 (110 aa).

The signal sequence occupies residues 1–18 (MKKLLAMILWLQLDRLSG). In terms of domain architecture, Ig-like spans 19–110 (ELKVEQNPLF…LSATYFCAVD (92 aa)). N-linked (GlcNAc...) asparagine glycans are attached at residues asparagine 36 and asparagine 42. The cysteines at positions 41 and 107 are disulfide-linked.

In terms of assembly, alpha-beta TR is a heterodimer composed of an alpha and beta chain; disulfide-linked. The alpha-beta TR is associated with the transmembrane signaling CD3 coreceptor proteins to form the TR-CD3 (TcR or TCR). The assembly of alpha-beta TR heterodimers with CD3 occurs in the endoplasmic reticulum where a single alpha-beta TR heterodimer associates with one CD3D-CD3E heterodimer, one CD3G-CD3E heterodimer and one CD247 homodimer forming a stable octameric structure. CD3D-CD3E and CD3G-CD3E heterodimers preferentially associate with TR alpha and TR beta chains, respectively. The association of the CD247 homodimer is the last step of TcR assembly in the endoplasmic reticulum and is required for transport to the cell surface.

It is found in the cell membrane. Its function is as follows. V region of the variable domain of T cell receptor (TR) alpha chain that participates in the antigen recognition. Alpha-beta T cell receptors are antigen specific receptors which are essential to the immune response and are present on the cell surface of T lymphocytes. Recognize peptide-major histocompatibility (MH) (pMH) complexes that are displayed by antigen presenting cells (APC), a prerequisite for efficient T cell adaptive immunity against pathogens. Binding of alpha-beta TR to pMH complex initiates TR-CD3 clustering on the cell surface and intracellular activation of LCK that phosphorylates the ITAM motifs of CD3G, CD3D, CD3E and CD247 enabling the recruitment of ZAP70. In turn ZAP70 phosphorylates LAT, which recruits numerous signaling molecules to form the LAT signalosome. The LAT signalosome propagates signal branching to three major signaling pathways, the calcium, the mitogen-activated protein kinase (MAPK) kinase and the nuclear factor NF-kappa-B (NF-kB) pathways, leading to the mobilization of transcription factors that are critical for gene expression and essential for T cell growth and differentiation. The T cell repertoire is generated in the thymus, by V-(D)-J rearrangement. This repertoire is then shaped by intrathymic selection events to generate a peripheral T cell pool of self-MH restricted, non-autoaggressive T cells. Post-thymic interaction of alpha-beta TR with the pMH complexes shapes TR structural and functional avidity. The protein is T cell receptor alpha variable 39 of Homo sapiens (Human).